The following is a 335-amino-acid chain: Holliday junction branch migration complex subunit RuvB (335 aa).

The segment at 1 to 181 (MERIIEIEKM…FGMNFWMQFY (181 aa)) is large ATPase domain (RuvB-L). Residues L20, R21, G62, K65, T66, T67, 128 to 130 (EDF), R171, Y181, and R218 each bind ATP. T66 is a Mg(2+) binding site. A small ATPAse domain (RuvB-S) region spans residues 182 to 252 (NIEELSQIIT…QARYALHELG (71 aa)). Residues 255–335 (DHGFDDLDLR…LPFEPNATLF (81 aa)) are head domain (RuvB-H). Positions 309 and 314 each coordinate DNA.

It belongs to the RuvB family. As to quaternary structure, homohexamer. Forms an RuvA(8)-RuvB(12)-Holliday junction (HJ) complex. HJ DNA is sandwiched between 2 RuvA tetramers; dsDNA enters through RuvA and exits via RuvB. An RuvB hexamer assembles on each DNA strand where it exits the tetramer. Each RuvB hexamer is contacted by two RuvA subunits (via domain III) on 2 adjacent RuvB subunits; this complex drives branch migration. In the full resolvosome a probable DNA-RuvA(4)-RuvB(12)-RuvC(2) complex forms which resolves the HJ.

The protein resides in the cytoplasm. The enzyme catalyses ATP + H2O = ADP + phosphate + H(+). The RuvA-RuvB-RuvC complex processes Holliday junction (HJ) DNA during genetic recombination and DNA repair, while the RuvA-RuvB complex plays an important role in the rescue of blocked DNA replication forks via replication fork reversal (RFR). RuvA specifically binds to HJ cruciform DNA, conferring on it an open structure. The RuvB hexamer acts as an ATP-dependent pump, pulling dsDNA into and through the RuvAB complex. RuvB forms 2 homohexamers on either side of HJ DNA bound by 1 or 2 RuvA tetramers; 4 subunits per hexamer contact DNA at a time. Coordinated motions by a converter formed by DNA-disengaged RuvB subunits stimulates ATP hydrolysis and nucleotide exchange. Immobilization of the converter enables RuvB to convert the ATP-contained energy into a lever motion, pulling 2 nucleotides of DNA out of the RuvA tetramer per ATP hydrolyzed, thus driving DNA branch migration. The RuvB motors rotate together with the DNA substrate, which together with the progressing nucleotide cycle form the mechanistic basis for DNA recombination by continuous HJ branch migration. Branch migration allows RuvC to scan DNA until it finds its consensus sequence, where it cleaves and resolves cruciform DNA. The polypeptide is Holliday junction branch migration complex subunit RuvB (Wolinella succinogenes (strain ATCC 29543 / DSM 1740 / CCUG 13145 / JCM 31913 / LMG 7466 / NCTC 11488 / FDC 602W) (Vibrio succinogenes)).